A 424-amino-acid polypeptide reads, in one-letter code: Protein shisa-9 (424 aa).

The first 23 residues, 1–23 (MRRVLRLLLGCFLTELCARVCRA), serve as a signal peptide directing secretion. Over 24–149 (QERAGHGQLA…DPLHDPTKDK (126 aa)) the chain is Extracellular. 3 N-linked (GlcNAc...) asparagine glycosylation sites follow: N45, N89, and N116. Residues 150–170 (TNLIVYIICGVVAVMVLVGIF) form a helical membrane-spanning segment. The Cytoplasmic portion of the chain corresponds to 171–424 (TKLGLEKAHR…ITNSKTEVTV (254 aa)). Residues 333–424 (PRAFSPEHGP…ITNSKTEVTV (92 aa)) are disordered. The segment covering 414–424 (FITNSKTEVTV) has biased composition (polar residues).

It belongs to the shisa family. SHISA9 subfamily. In terms of assembly, component of some AMPA receptors (ionotropic glutamate receptors) complex, at least composed of some AMPA receptor (GRIA1, GRIA2 and/or GRIA3), CACNG2 and SHISA9, as well as low level of DLG4.

It is found in the cell projection. Its subcellular location is the dendritic spine membrane. It localises to the synapse. Functionally, regulator of short-term neuronal synaptic plasticity in the dentate gyrus. Associates with AMPA receptors (ionotropic glutamate receptors) in synaptic spines and promotes AMPA receptor desensitization at excitatory synapses. In Homo sapiens (Human), this protein is Protein shisa-9 (SHISA9).